Consider the following 308-residue polypeptide: Transaldolase (308 aa).

Residue Lys-125 is the Schiff-base intermediate with substrate of the active site.

The protein belongs to the transaldolase family. Type 1 subfamily. Homodimer.

Its subcellular location is the cytoplasm. It carries out the reaction D-sedoheptulose 7-phosphate + D-glyceraldehyde 3-phosphate = D-erythrose 4-phosphate + beta-D-fructose 6-phosphate. It participates in carbohydrate degradation; pentose phosphate pathway; D-glyceraldehyde 3-phosphate and beta-D-fructose 6-phosphate from D-ribose 5-phosphate and D-xylulose 5-phosphate (non-oxidative stage): step 2/3. Its function is as follows. Transaldolase is important for the balance of metabolites in the pentose-phosphate pathway. This is Transaldolase from Pseudomonas putida (strain GB-1).